Reading from the N-terminus, the 212-residue chain is Ribosomal RNA large subunit methyltransferase E (212 aa).

A disordered region spans residues 1-26 (MPAERPSVSQKPKNPYKRPDAFTKAA). S-adenosyl-L-methionine-binding residues include Gly-63, Trp-65, Asp-83, Asp-101, and Asp-122. Residue Lys-162 is the Proton acceptor of the active site.

The protein belongs to the class I-like SAM-binding methyltransferase superfamily. RNA methyltransferase RlmE family.

The protein resides in the cytoplasm. The catalysed reaction is uridine(2552) in 23S rRNA + S-adenosyl-L-methionine = 2'-O-methyluridine(2552) in 23S rRNA + S-adenosyl-L-homocysteine + H(+). Its function is as follows. Specifically methylates the uridine in position 2552 of 23S rRNA at the 2'-O position of the ribose in the fully assembled 50S ribosomal subunit. This chain is Ribosomal RNA large subunit methyltransferase E, found in Sorangium cellulosum (strain So ce56) (Polyangium cellulosum (strain So ce56)).